The following is a 604-amino-acid chain: UvrABC system protein C (604 aa).

The GIY-YIG domain occupies 12-90; that stretch reads TAPGVYLMRD…IKQHQPRYNL (79 aa). The UVR domain maps to 200-235; it reads KDLVSGFRQRMKEAAEGLHYEEAARWRDLLKAIDTT.

The protein belongs to the UvrC family. As to quaternary structure, interacts with UvrB in an incision complex.

It localises to the cytoplasm. In terms of biological role, the UvrABC repair system catalyzes the recognition and processing of DNA lesions. UvrC both incises the 5' and 3' sides of the lesion. The N-terminal half is responsible for the 3' incision and the C-terminal half is responsible for the 5' incision. This is UvrABC system protein C from Trichlorobacter lovleyi (strain ATCC BAA-1151 / DSM 17278 / SZ) (Geobacter lovleyi).